Reading from the N-terminus, the 444-residue chain is Serine carboxypeptidase-like 50 (444 aa).

The N-terminal stretch at 1-22 is a signal peptide; that stretch reads MEQATTLFILLSTLLLAVSVES. A disulfide bond links Cys-79 and Cys-308. The active site involves Ser-170. The N-linked (GlcNAc...) asparagine glycan is linked to Asn-263. Asp-345 is a catalytic residue. Asn-361 is a glycosylation site (N-linked (GlcNAc...) asparagine). His-403 is a catalytic residue.

The protein belongs to the peptidase S10 family. In terms of tissue distribution, ubiquitous.

It is found in the secreted. Its function is as follows. Probable carboxypeptidase. This chain is Serine carboxypeptidase-like 50 (SCPL50), found in Arabidopsis thaliana (Mouse-ear cress).